Here is a 604-residue protein sequence, read N- to C-terminus: Nuclear factor erythroid 2-related factor 2 (604 aa).

Residues 29 to 31 carry the DLG motif motif; sequence DLG. At serine 40 the chain carries Phosphoserine; by PKC. An ETGE motif motif is present at residues 79 to 82; that stretch reads ETGE. The residue at position 214 (serine 214) is a Phosphoserine. The segment at 334–447 is disordered; that stretch reads TVEFNDSDSG…VPFTKDKHSS (114 aa). Polar residues-rich tracts occupy residues 340 to 352 and 395 to 407; these read SDSG…SPSR and PTHS…QPLS. Residues lysine 461, lysine 471, and lysine 486 are each glycosylated (N-linked (Glc) (glycation) lysine). Residues 496 to 559 form the bZIP domain; it reads LIRDIRRRGK…HLLKRKLSTL (64 aa). N-linked (Glc) (glycation) arginine glycosylation is present at arginine 498. Residues 498-517 form a basic motif region; sequence RDIRRRGKNKVAAQNCRKRK. The segment at 521–528 is leucine-zipper; it reads IVELEQDL. N-linked (Glc) (glycation) arginine glycosylation occurs at arginine 568. Residues 570 to 604 form a disordered region; the sequence is EDGKPYSPSEYSLQQTRDGNVFLVPKSKKPDTKKN. Lysine 573 is a glycosylation site (N-linked (Glc) (glycation) lysine). Residues 578–587 show a composition bias toward polar residues; sequence SEYSLQQTRD. Residues 590–595 are mediates interaction with CHD6 and is necessary to activate transcription; it reads VFLVPK. 2 positions are modified to N6-acetyllysine; by CREBBP: lysine 595 and lysine 598.

The protein belongs to the bZIP family. CNC subfamily. Heterodimer; heterodimerizes with small Maf proteins. Interacts (via the bZIP domain) with MAFG and MAFK; required for binding to antioxidant response elements (AREs) on DNA. Interacts with KEAP1; the interaction is direct and promotes ubiquitination by the BCR(KEAP1) E3 ubiquitin ligase complex. Forms a ternary complex with PGAM5 and KEAP1. Interacts with EEF1D at heat shock promoter elements (HSE). Interacts via its leucine-zipper domain with the coiled-coil domain of PMF1. Interacts with CHD6; involved in activation of the transcription. Interacts with ESRRB; represses NFE2L2 transcriptional activity. Interacts with MOTS-c, a peptide produced by the mitochondrially encoded 12S rRNA MT-RNR1; the interaction occurs in the nucleus following metabolic stress. In terms of processing, ubiquitinated in the cytoplasm by the BCR(KEAP1) E3 ubiquitin ligase complex leading to its degradation. In response to oxidative stress, electrophile metabolites, such as sulforaphane, modify KEAP1, leading to inhibit activity of the BCR(KEAP1) complex, promoting NFE2L2/NRF2 nuclear accumulation and activity. In response to autophagy, the BCR(KEAP1) complex is inactivated. Phosphorylated by EIF2AK3/PERK following unfolded protein response (UPR), promoting dissociation from its cytoplasmic inhibitor KEAP1, followed by its translocation into the nucleus. Phosphorylation of Ser-40 by PKC in response to oxidative stress dissociates NFE2L2 from its cytoplasmic inhibitor KEAP1, promoting its translocation into the nucleus. Post-translationally, acetylation at Lys-595 and Lys-598 increases nuclear localization whereas deacetylation by SIRT1 enhances cytoplasmic presence. In terms of processing, glycation impairs transcription factor activity by preventing heterodimerization with small Maf proteins. Deglycation by FN3K restores activity.

It is found in the cytoplasm. It localises to the cytosol. The protein localises to the nucleus. Transcription factor that plays a key role in the response to oxidative stress: binds to antioxidant response (ARE) elements present in the promoter region of many cytoprotective genes, such as phase 2 detoxifying enzymes, and promotes their expression, thereby neutralizing reactive electrophiles. In normal conditions, ubiquitinated and degraded in the cytoplasm by the BCR(KEAP1) complex. In response to oxidative stress, electrophile metabolites inhibit activity of the BCR(KEAP1) complex, promoting nuclear accumulation of NFE2L2/NRF2, heterodimerization with one of the small Maf proteins and binding to ARE elements of cytoprotective target genes. The NFE2L2/NRF2 pathway is also activated in response to selective autophagy: autophagy promotes interaction between KEAP1 and SQSTM1/p62 and subsequent inactivation of the BCR(KEAP1) complex, leading to NFE2L2/NRF2 nuclear accumulation and expression of cytoprotective genes. The NFE2L2/NRF2 pathway is also activated during the unfolded protein response (UPR), contributing to redox homeostasis and cell survival following endoplasmic reticulum stress. May also be involved in the transcriptional activation of genes of the beta-globin cluster by mediating enhancer activity of hypersensitive site 2 of the beta-globin locus control region. Also plays an important role in the regulation of the innate immune response. It is a critical regulator of the innate immune response and survival during sepsis by maintaining redox homeostasis and restraint of the dysregulation of pro-inflammatory signaling pathways like MyD88-dependent and -independent and TNF-alpha signaling. Suppresses macrophage inflammatory response by blocking pro-inflammatory cytokine transcription and the induction of IL6. Binds to the proximity of pro-inflammatory genes in macrophages and inhibits RNA Pol II recruitment. The inhibition is independent of the Nrf2-binding motif and reactive oxygen species level. Represses antiviral cytosolic DNA sensing by suppressing the expression of the adapter protein STING1 and decreasing responsiveness to STING1 agonists while increasing susceptibility to infection with DNA viruses. The chain is Nuclear factor erythroid 2-related factor 2 from Rattus norvegicus (Rat).